An 864-amino-acid polypeptide reads, in one-letter code: DNA mismatch repair protein MutS (864 aa).

An ATP-binding site is contributed by 607–614 (GPNMGGKS).

The protein belongs to the DNA mismatch repair MutS family.

This protein is involved in the repair of mismatches in DNA. It is possible that it carries out the mismatch recognition step. This protein has a weak ATPase activity. In Neisseria meningitidis serogroup B (strain ATCC BAA-335 / MC58), this protein is DNA mismatch repair protein MutS.